A 391-amino-acid chain; its full sequence is uncharacterized protein (391 aa).

The region spanning 235–330 is the HTH arsR-type domain; sequence VFILSRINLL…LYLKNETQKS (96 aa).

This is an uncharacterized protein from Methanocaldococcus jannaschii (strain ATCC 43067 / DSM 2661 / JAL-1 / JCM 10045 / NBRC 100440) (Methanococcus jannaschii).